We begin with the raw amino-acid sequence, 277 residues long: Small ribosomal subunit protein uS2 (277 aa).

Residues 247–277 (LSAFESSQDDESDEENREEDLLAKKFDGEAN) are disordered. A compositionally biased stretch (acidic residues) spans 253–264 (SQDDESDEENRE). Residues 265-277 (EDLLAKKFDGEAN) are compositionally biased toward basic and acidic residues.

It belongs to the universal ribosomal protein uS2 family.

This chain is Small ribosomal subunit protein uS2 (rpsB), found in Chlamydia pneumoniae (Chlamydophila pneumoniae).